The primary structure comprises 315 residues: Transaldolase (315 aa).

The Schiff-base intermediate with substrate role is filled by K131.

The protein belongs to the transaldolase family. Type 1 subfamily. As to quaternary structure, homodimer.

It is found in the cytoplasm. The enzyme catalyses D-sedoheptulose 7-phosphate + D-glyceraldehyde 3-phosphate = D-erythrose 4-phosphate + beta-D-fructose 6-phosphate. The protein operates within carbohydrate degradation; pentose phosphate pathway; D-glyceraldehyde 3-phosphate and beta-D-fructose 6-phosphate from D-ribose 5-phosphate and D-xylulose 5-phosphate (non-oxidative stage): step 2/3. Transaldolase is important for the balance of metabolites in the pentose-phosphate pathway. This Actinobacillus pleuropneumoniae serotype 3 (strain JL03) protein is Transaldolase.